Here is a 99-residue protein sequence, read N- to C-terminus: Aspartyl/glutamyl-tRNA(Asn/Gln) amidotransferase subunit C (99 aa).

The protein belongs to the GatC family. As to quaternary structure, heterotrimer of A, B and C subunits.

The catalysed reaction is L-glutamyl-tRNA(Gln) + L-glutamine + ATP + H2O = L-glutaminyl-tRNA(Gln) + L-glutamate + ADP + phosphate + H(+). It carries out the reaction L-aspartyl-tRNA(Asn) + L-glutamine + ATP + H2O = L-asparaginyl-tRNA(Asn) + L-glutamate + ADP + phosphate + 2 H(+). Its function is as follows. Allows the formation of correctly charged Asn-tRNA(Asn) or Gln-tRNA(Gln) through the transamidation of misacylated Asp-tRNA(Asn) or Glu-tRNA(Gln) in organisms which lack either or both of asparaginyl-tRNA or glutaminyl-tRNA synthetases. The reaction takes place in the presence of glutamine and ATP through an activated phospho-Asp-tRNA(Asn) or phospho-Glu-tRNA(Gln). This chain is Aspartyl/glutamyl-tRNA(Asn/Gln) amidotransferase subunit C, found in Mycolicibacterium vanbaalenii (strain DSM 7251 / JCM 13017 / BCRC 16820 / KCTC 9966 / NRRL B-24157 / PYR-1) (Mycobacterium vanbaalenii).